We begin with the raw amino-acid sequence, 179 residues long: Large ribosomal subunit protein uL6 (179 aa).

The protein belongs to the universal ribosomal protein uL6 family. Part of the 50S ribosomal subunit.

Functionally, this protein binds to the 23S rRNA, and is important in its secondary structure. It is located near the subunit interface in the base of the L7/L12 stalk, and near the tRNA binding site of the peptidyltransferase center. This chain is Large ribosomal subunit protein uL6, found in Syntrophobacter fumaroxidans (strain DSM 10017 / MPOB).